The chain runs to 394 residues: 1-deoxy-D-xylulose 5-phosphate reductoisomerase (394 aa).

NADPH-binding residues include Thr12, Gly13, Ser14, Ile15, Lys39, Gln40, and Asn126. Lys127 is a 1-deoxy-D-xylulose 5-phosphate binding site. Glu128 provides a ligand contact to NADPH. Mn(2+) is bound at residue Asp152. Residues Ser153, Glu154, Ser183, and His206 each contribute to the 1-deoxy-D-xylulose 5-phosphate site. Glu154 is a binding site for Mn(2+). An NADPH-binding site is contributed by Gly212. The 1-deoxy-D-xylulose 5-phosphate site is built by Ser219, Asn224, Lys225, and Glu228. Glu228 provides a ligand contact to Mn(2+).

Belongs to the DXR family. The cofactor is Mg(2+). Mn(2+) serves as cofactor.

It catalyses the reaction 2-C-methyl-D-erythritol 4-phosphate + NADP(+) = 1-deoxy-D-xylulose 5-phosphate + NADPH + H(+). It functions in the pathway isoprenoid biosynthesis; isopentenyl diphosphate biosynthesis via DXP pathway; isopentenyl diphosphate from 1-deoxy-D-xylulose 5-phosphate: step 1/6. Catalyzes the NADPH-dependent rearrangement and reduction of 1-deoxy-D-xylulose-5-phosphate (DXP) to 2-C-methyl-D-erythritol 4-phosphate (MEP). The protein is 1-deoxy-D-xylulose 5-phosphate reductoisomerase of Neisseria meningitidis serogroup A / serotype 4A (strain DSM 15465 / Z2491).